The sequence spans 770 residues: Glutamate carboxypeptidase 2 homolog (770 aa).

Residues 1–19 are Cytoplasmic-facing; it reads MPYVGVGAQKASTNLTGGP. Residues 20-40 form a helical; Signal-anchor for type II membrane protein membrane-spanning segment; the sequence is MMKAYAFVLAFFLLGLGVLAL. Residues 41 to 770 are Extracellular-facing; the sequence is GKHHSGRRFN…CVVNTLRDVI (730 aa). N-linked (GlcNAc...) asparagine glycosylation is found at Asn175 and Asn337. Positions 282–597 are catalytic; it reads SKKELFKGRT…QYWAELAKTF (316 aa). Positions 387 and 397 each coordinate Zn(2+). Asn417 carries N-linked (GlcNAc...) asparagine glycosylation. Glu435 serves as the catalytic Nucleophile. Zn(2+) contacts are provided by Glu436 and Asp464. Residues Asn469 and Asn551 are each glycosylated (N-linked (GlcNAc...) asparagine). His562 contributes to the Zn(2+) binding site. Residues Asn606 and Asn630 are each glycosylated (N-linked (GlcNAc...) asparagine).

The protein belongs to the peptidase M28 family. M28B subfamily. Zn(2+) serves as cofactor.

It is found in the membrane. It carries out the reaction Release of an unsubstituted, C-terminal glutamyl residue, typically from Ac-Asp-Glu or folylpoly-gamma-glutamates.. This Caenorhabditis briggsae protein is Glutamate carboxypeptidase 2 homolog.